Consider the following 477-residue polypeptide: Cysteine--tRNA ligase (477 aa).

Cysteine 34 contributes to the Zn(2+) binding site. Residues 36–46 carry the 'HIGH' region motif; it reads PTVYDFAHIGN. Zn(2+) contacts are provided by cysteine 235, histidine 260, and glutamate 264. Residues 293–297 carry the 'KMSKS' region motif; sequence KMSKS. Lysine 296 is a binding site for ATP.

The protein belongs to the class-I aminoacyl-tRNA synthetase family. Monomer. The cofactor is Zn(2+).

It localises to the cytoplasm. The catalysed reaction is tRNA(Cys) + L-cysteine + ATP = L-cysteinyl-tRNA(Cys) + AMP + diphosphate. This chain is Cysteine--tRNA ligase, found in Mesorhizobium japonicum (strain LMG 29417 / CECT 9101 / MAFF 303099) (Mesorhizobium loti (strain MAFF 303099)).